The chain runs to 191 residues: dTTP/UTP pyrophosphatase (191 aa).

D70 serves as the catalytic Proton acceptor.

The protein belongs to the Maf family. YhdE subfamily. Requires a divalent metal cation as cofactor.

It is found in the cytoplasm. It catalyses the reaction dTTP + H2O = dTMP + diphosphate + H(+). The enzyme catalyses UTP + H2O = UMP + diphosphate + H(+). Functionally, nucleoside triphosphate pyrophosphatase that hydrolyzes dTTP and UTP. May have a dual role in cell division arrest and in preventing the incorporation of modified nucleotides into cellular nucleic acids. The sequence is that of dTTP/UTP pyrophosphatase from Clostridium novyi (strain NT).